We begin with the raw amino-acid sequence, 231 residues long: ATP phosphoribosyltransferase (231 aa).

The protein belongs to the ATP phosphoribosyltransferase family. Short subfamily. As to quaternary structure, heteromultimer composed of HisG and HisZ subunits.

Its subcellular location is the cytoplasm. It catalyses the reaction 1-(5-phospho-beta-D-ribosyl)-ATP + diphosphate = 5-phospho-alpha-D-ribose 1-diphosphate + ATP. Its pathway is amino-acid biosynthesis; L-histidine biosynthesis; L-histidine from 5-phospho-alpha-D-ribose 1-diphosphate: step 1/9. Functionally, catalyzes the condensation of ATP and 5-phosphoribose 1-diphosphate to form N'-(5'-phosphoribosyl)-ATP (PR-ATP). Has a crucial role in the pathway because the rate of histidine biosynthesis seems to be controlled primarily by regulation of HisG enzymatic activity. This is ATP phosphoribosyltransferase (hisG) from Rhizobium meliloti (strain 1021) (Ensifer meliloti).